We begin with the raw amino-acid sequence, 168 residues long: G/U mismatch-specific DNA glycosylase (168 aa).

Belongs to the uracil-DNA glycosylase (UDG) superfamily. TDG/mug family. In terms of assembly, binds DNA as a monomer.

The protein localises to the cytoplasm. The enzyme catalyses Specifically hydrolyzes mismatched double-stranded DNA and polynucleotides, releasing free uracil.. In terms of biological role, excises ethenocytosine and uracil, which can arise by alkylation or deamination of cytosine, respectively, from the corresponding mispairs with guanine in ds-DNA. It is capable of hydrolyzing the carbon-nitrogen bond between the sugar-phosphate backbone of the DNA and the mispaired base. The complementary strand guanine functions in substrate recognition. Required for DNA damage lesion repair in stationary-phase cells. The chain is G/U mismatch-specific DNA glycosylase from Salmonella gallinarum (strain 287/91 / NCTC 13346).